Reading from the N-terminus, the 336-residue chain is Cyclin-H1-1 (336 aa).

At Ala-2 the chain carries N-acetylalanine. Residues 297 to 336 (KSCLGHSSSHDESKKREKRSKHKSHRSSNDTPNGAPPPIG) form a disordered region. Positions 312-322 (REKRSKHKSHR) are enriched in basic residues.

This sequence belongs to the cyclin family. In terms of assembly, interacts with CDKA-1, CDKD-2 and CDKD-3, but not CDKD-1 and CDKF-1.

The protein resides in the cytoplasm. The protein localises to the nucleus. In terms of biological role, associates with CDK-2 and CDK-3 and activates the CDK kinases. In Arabidopsis thaliana (Mouse-ear cress), this protein is Cyclin-H1-1 (CYCH1-1).